A 393-amino-acid chain; its full sequence is G protein-activated inward rectifier potassium channel 3 (393 aa).

Residues 1-23 (MAQENAAFSPGQEEPPRRRGRQR) are disordered. The Cytoplasmic segment spans residues 1–57 (MAQENAAFSPGQEEPPRRRGRQRYVEKDGRCNVQQGNVRETYRYLTDLFTTLVDLQW). The helical transmembrane segment at 58-82 (RLSLLFFVLAYALTWLFFGAIWWLI) threads the bilayer. The Extracellular portion of the chain corresponds to 83-106 (AYGRGDLEHLEDTAWTPCVNNLNG). The helical; Pore-forming intramembrane region spans 107 to 118 (FVAAFLFSIETE). Positions 119–125 (TTIGYGH) form an intramembrane region, pore-forming. A Selectivity filter motif is present at residues 120-125 (TIGYGH). Topologically, residues 126–134 (RVITDQCPE) are extracellular. Residues 135–156 (GIVLLLLQAILGSMVNAFMVGC) form a helical membrane-spanning segment. Residues 157-393 (MFVKISQPNK…LPPPESESKV (237 aa)) lie on the Cytoplasmic side of the membrane. Residues 360 to 393 (KVEEEGAGEGAGGEAGADKEQNGCLPPPESESKV) are disordered. Positions 384–393 (LPPPESESKV) are enriched in pro residues. Residues 390-393 (ESKV) carry the PDZ-binding motif.

The protein belongs to the inward rectifier-type potassium channel (TC 1.A.2.1) family. KCNJ9 subfamily. Associates with KCNJ3/GIRK1 to form a G-protein-activated heteromultimer pore-forming unit. Interacts (via PDZ-binding motif) with SNX27 (via PDZ domain); the interaction is required when endocytosed to prevent degradation in lysosomes and promote recycling to the plasma membrane.

It is found in the membrane. The enzyme catalyses K(+)(in) = K(+)(out). In terms of biological role, inward rectifier potassium channels are characterized by a greater tendency to allow potassium to flow into the cell rather than out of it. Their voltage dependence is regulated by the concentration of extracellular potassium; as external potassium is raised, the voltage range of the channel opening shifts to more positive voltages. The inward rectification is mainly due to the blockage of outward current by internal magnesium, This receptor is controlled by G proteins. Unable to produce channel activity when expressed alone. Forms a functional channel in association with KCNJ3/GIRK1. The chain is G protein-activated inward rectifier potassium channel 3 (KCNJ9) from Homo sapiens (Human).